The sequence spans 292 residues: MASSMRSLFTDHSRYVESFRRFLSNSTEHQCMQEFMDKKLPGIIARIGDIKSEIKILSIGGGAGEIDLQILSKVQAQYPGVHIINEVVEPSAEQITKYKELVAKTSNLENIKFAWHKETSSEYQNRMMEKKELQRWDFIHMIQMLYYVKDIPATLKFFHSLLATNAKILIIIVSGASSWQKLWEKYGSRLPRNDLCQYVTSSDLTQMLDKLGIKYEYYDLLSTMDISDCFIDGNENGDLLWDFLTETCNFNTTAPPDLKAEIMKDLQKPEFSIKKEGKVLFNNSLSFIVVEA.

A substrate-binding site is contributed by Glu28. S-adenosyl-L-methionine-binding residues include Gly60, Glu89, Gln94, Ser120, and Ile142. Asn283 provides a ligand contact to substrate.

It belongs to the class I-like SAM-binding methyltransferase superfamily. HNMT family. In terms of assembly, monomer.

The protein localises to the cytoplasm. It catalyses the reaction histamine + S-adenosyl-L-methionine = N(tau)-methylhistamine + S-adenosyl-L-homocysteine + H(+). Its function is as follows. Inactivates histamine by N-methylation. Plays an important role in degrading histamine and in regulating the airway response to histamine. In Bos taurus (Bovine), this protein is Histamine N-methyltransferase (HNMT).